Consider the following 720-residue polypeptide: Engulfment and cell motility protein 2 (720 aa).

The residue at position 48 (Tyr-48) is a Phosphotyrosine. The 175-residue stretch at 311–485 (AQRDIIFELR…VVREQITRAL (175 aa)) folds into the ELMO domain. Ser-503 is modified (phosphoserine). The 122-residue stretch at 553–674 (SSFRKIGNRR…LLGKDMSSEL (122 aa)) folds into the PH domain. Residues 700 to 707 (PEAPPPIP) carry the SH3-binding motif. Phosphotyrosine is present on Tyr-717.

Interacts with the SH3-domain of DOCK1 via its SH3-binding site. Probably part of a complex with DOCK1 and RAC1. Probably part of a complex with DOCK1 and CRK isoform CRK-II. Interacts with ARHGEF16, DOCK4 and EPHA2; mediates activation of RAC1 by EPHA2. Interacts with ADGRB3. Interacts with AUTS2; the interaction is direct. In terms of tissue distribution, widely expressed, with a higher expression in skeletal muscle, kidney and placenta.

Its subcellular location is the cytoplasm. The protein resides in the cytosol. It localises to the membrane. Functionally, involved in cytoskeletal rearrangements required for phagocytosis of apoptotic cells and cell motility. Acts in association with DOCK1 and CRK. Was initially proposed to be required in complex with DOCK1 to activate Rac Rho small GTPases. May enhance the guanine nucleotide exchange factor (GEF) activity of DOCK1. The polypeptide is Engulfment and cell motility protein 2 (ELMO2) (Homo sapiens (Human)).